The primary structure comprises 81 residues: Sulfur carrier protein TusA (81 aa).

C19 functions as the Cysteine persulfide intermediate in the catalytic mechanism.

Belongs to the sulfur carrier protein TusA family.

It localises to the cytoplasm. In terms of biological role, sulfur carrier protein which probably makes part of a sulfur-relay system. The chain is Sulfur carrier protein TusA from Aeromonas salmonicida (strain A449).